We begin with the raw amino-acid sequence, 434 residues long: Gamma-glutamyl phosphate reductase (434 aa).

This sequence belongs to the gamma-glutamyl phosphate reductase family.

Its subcellular location is the cytoplasm. The catalysed reaction is L-glutamate 5-semialdehyde + phosphate + NADP(+) = L-glutamyl 5-phosphate + NADPH + H(+). It participates in amino-acid biosynthesis; L-proline biosynthesis; L-glutamate 5-semialdehyde from L-glutamate: step 2/2. Catalyzes the NADPH-dependent reduction of L-glutamate 5-phosphate into L-glutamate 5-semialdehyde and phosphate. The product spontaneously undergoes cyclization to form 1-pyrroline-5-carboxylate. The protein is Gamma-glutamyl phosphate reductase of Pelotomaculum thermopropionicum (strain DSM 13744 / JCM 10971 / SI).